A 289-amino-acid polypeptide reads, in one-letter code: Ubiquinone biosynthesis O-methyltransferase (289 aa).

Residue Arg36 coordinates S-adenosyl-L-methionine. Residues Arg50–Asn98 enclose the RPE1 insert domain. Positions 109, 130, and 172 each coordinate S-adenosyl-L-methionine.

Belongs to the methyltransferase superfamily. UbiG/COQ3 family.

It carries out the reaction a 3-demethylubiquinol + S-adenosyl-L-methionine = a ubiquinol + S-adenosyl-L-homocysteine + H(+). The catalysed reaction is a 3-(all-trans-polyprenyl)benzene-1,2-diol + S-adenosyl-L-methionine = a 2-methoxy-6-(all-trans-polyprenyl)phenol + S-adenosyl-L-homocysteine + H(+). Its pathway is cofactor biosynthesis; ubiquinone biosynthesis. O-methyltransferase that catalyzes the 2 O-methylation steps in the ubiquinone biosynthetic pathway. In Rickettsia conorii (strain ATCC VR-613 / Malish 7), this protein is Ubiquinone biosynthesis O-methyltransferase.